The primary structure comprises 305 residues: Imidazoleglycerol-phosphate dehydratase (305 aa).

It belongs to the imidazoleglycerol-phosphate dehydratase family.

It localises to the cytoplasm. The catalysed reaction is D-erythro-1-(imidazol-4-yl)glycerol 3-phosphate = 3-(imidazol-4-yl)-2-oxopropyl phosphate + H2O. The protein operates within amino-acid biosynthesis; L-histidine biosynthesis; L-histidine from 5-phospho-alpha-D-ribose 1-diphosphate: step 6/9. This Neisseria meningitidis serogroup C (strain 053442) protein is Imidazoleglycerol-phosphate dehydratase.